The primary structure comprises 128 residues: Probable 4-amino-4-deoxy-L-arabinose-phosphoundecaprenol flippase subunit ArnF (128 aa).

Residues 1–2 lie on the Cytoplasmic side of the membrane; that stretch reads MG. Residues 3–23 traverse the membrane as a helical segment; sequence LMWGLFSVIIASAAQLSLGFA. The Periplasmic portion of the chain corresponds to 24 to 35; the sequence is ASHLPPMTHLWD. The helical transmembrane segment at 36 to 56 threads the bilayer; it reads FIAALLAFGLDARILLLGLLG. Residues 57-76 lie on the Cytoplasmic side of the membrane; that stretch reads YLLSVFCWYKTLHKLALSKA. A helical membrane pass occupies residues 77–97; that stretch reads YALLSMSYVLVWIASMILPGW. The Periplasmic segment spans residues 98 to 100; it reads EGT. A helical membrane pass occupies residues 101–121; the sequence is FSLKALLGVACIMSGLMLIFL. Topologically, residues 122 to 128 are cytoplasmic; the sequence is PTTKQRY.

Belongs to the ArnF family. In terms of assembly, heterodimer of ArnE and ArnF.

The protein resides in the cell inner membrane. It participates in bacterial outer membrane biogenesis; lipopolysaccharide biosynthesis. Translocates 4-amino-4-deoxy-L-arabinose-phosphoundecaprenol (alpha-L-Ara4N-phosphoundecaprenol) from the cytoplasmic to the periplasmic side of the inner membrane. In Escherichia coli O17:K52:H18 (strain UMN026 / ExPEC), this protein is Probable 4-amino-4-deoxy-L-arabinose-phosphoundecaprenol flippase subunit ArnF.